The chain runs to 580 residues: F-box only protein 24 (580 aa).

One can recognise an F-box domain in the interval proline 36–isoleucine 82. One copy of the RCC1 repeat lies at glycine 376–serine 425.

In terms of assembly, directly interacts with SKP1 and CUL1.

Its function is as follows. Substrate-recognition component of the SCF (SKP1-CUL1-F-box protein)-type E3 ubiquitin ligase complex. This is F-box only protein 24 (FBXO24) from Macaca fascicularis (Crab-eating macaque).